Reading from the N-terminus, the 27-residue chain is Kunitz-type serine protease inhibitor 3 (27 aa).

In terms of domain architecture, BPTI/Kunitz inhibitor spans 1-27 (EVHNFACLGKPDPGGCAHYIYRRYYYV).

The protein resides in the secreted. Functionally, inhibits bovine trypsin and human neutrophil elastase. This chain is Kunitz-type serine protease inhibitor 3, found in Rhipicephalus microplus (Cattle tick).